Consider the following 183-residue polypeptide: Translation initiation factor IF-3 (183 aa).

Belongs to the IF-3 family. In terms of assembly, monomer.

The protein resides in the cytoplasm. In terms of biological role, IF-3 binds to the 30S ribosomal subunit and shifts the equilibrium between 70S ribosomes and their 50S and 30S subunits in favor of the free subunits, thus enhancing the availability of 30S subunits on which protein synthesis initiation begins. The chain is Translation initiation factor IF-3 from Azobacteroides pseudotrichonymphae genomovar. CFP2.